Reading from the N-terminus, the 134-residue chain is D-ribose pyranase (134 aa).

Catalysis depends on H20, which acts as the Proton donor. Substrate is bound by residues D28, H101, and 123–125 (YCN).

The protein belongs to the RbsD / FucU family. RbsD subfamily. In terms of assembly, homodecamer.

It is found in the cytoplasm. It carries out the reaction beta-D-ribopyranose = beta-D-ribofuranose. Its pathway is carbohydrate metabolism; D-ribose degradation; D-ribose 5-phosphate from beta-D-ribopyranose: step 1/2. In terms of biological role, catalyzes the interconversion of beta-pyran and beta-furan forms of D-ribose. This chain is D-ribose pyranase, found in Pseudomonas fluorescens (strain ATCC BAA-477 / NRRL B-23932 / Pf-5).